We begin with the raw amino-acid sequence, 101 residues long: Small ribosomal subunit protein uS14 (101 aa).

Belongs to the universal ribosomal protein uS14 family. Part of the 30S ribosomal subunit. Contacts proteins S3 and S10.

Functionally, binds 16S rRNA, required for the assembly of 30S particles and may also be responsible for determining the conformation of the 16S rRNA at the A site. The protein is Small ribosomal subunit protein uS14 of Aliivibrio fischeri (strain MJ11) (Vibrio fischeri).